The primary structure comprises 620 residues: Proline--tRNA ligase (620 aa).

Belongs to the class-II aminoacyl-tRNA synthetase family. ProS type 1 subfamily. As to quaternary structure, homodimer.

The protein resides in the cytoplasm. It catalyses the reaction tRNA(Pro) + L-proline + ATP = L-prolyl-tRNA(Pro) + AMP + diphosphate. Functionally, catalyzes the attachment of proline to tRNA(Pro) in a two-step reaction: proline is first activated by ATP to form Pro-AMP and then transferred to the acceptor end of tRNA(Pro). As ProRS can inadvertently accommodate and process non-cognate amino acids such as alanine and cysteine, to avoid such errors it has two additional distinct editing activities against alanine. One activity is designated as 'pretransfer' editing and involves the tRNA(Pro)-independent hydrolysis of activated Ala-AMP. The other activity is designated 'posttransfer' editing and involves deacylation of mischarged Ala-tRNA(Pro). The misacylated Cys-tRNA(Pro) is not edited by ProRS. The polypeptide is Proline--tRNA ligase (Streptococcus thermophilus (strain ATCC BAA-491 / LMD-9)).